We begin with the raw amino-acid sequence, 395 residues long: Zinc finger protein 385D (395 aa).

The Matrin-type 1 zinc-finger motif lies at 80 to 110; sequence ISCNICQLRFNSDSQAAAHYKGTKHAKKLKA. The span at 169–193 shows a compositional bias: polar residues; that stretch reads MTTEITSKVEKSPTTATGNSSCPST. The segment at 169–194 is disordered; the sequence is MTTEITSKVEKSPTTATGNSSCPSTE. Matrin-type zinc fingers lie at residues 204–234 and 267–297; these read LYCS…MLEA and FHCE…RAAG. A disordered region spans residues 282-309; it reads LKQHISSRRHKDRAAGKPPKPKYSPYNK.

It localises to the nucleus. The polypeptide is Zinc finger protein 385D (ZNF385D) (Homo sapiens (Human)).